The primary structure comprises 169 residues: Protein-export protein SecB (169 aa).

This sequence belongs to the SecB family. In terms of assembly, homotetramer, a dimer of dimers. One homotetramer interacts with 1 SecA dimer.

It localises to the cytoplasm. Functionally, one of the proteins required for the normal export of preproteins out of the cell cytoplasm. It is a molecular chaperone that binds to a subset of precursor proteins, maintaining them in a translocation-competent state. It also specifically binds to its receptor SecA. The sequence is that of Protein-export protein SecB from Haemophilus influenzae (strain PittEE).